The chain runs to 499 residues: Glycerol kinase (499 aa).

Thr-13 lines the ADP pocket. ATP contacts are provided by Thr-13, Thr-14, and Ser-15. Position 13 (Thr-13) interacts with sn-glycerol 3-phosphate. Arg-17 provides a ligand contact to ADP. Sn-glycerol 3-phosphate is bound by residues Arg-83, Glu-84, Tyr-135, and Asp-245. The glycerol site is built by Arg-83, Glu-84, Tyr-135, Asp-245, and Gln-246. Residues Thr-267 and Gly-310 each coordinate ADP. ATP-binding residues include Thr-267, Gly-310, Gln-314, and Ala-411. Ala-411 and Asn-415 together coordinate ADP.

Belongs to the FGGY kinase family.

It carries out the reaction glycerol + ATP = sn-glycerol 3-phosphate + ADP + H(+). Its pathway is polyol metabolism; glycerol degradation via glycerol kinase pathway; sn-glycerol 3-phosphate from glycerol: step 1/1. With respect to regulation, inhibited by fructose 1,6-bisphosphate (FBP). In terms of biological role, key enzyme in the regulation of glycerol uptake and metabolism. Catalyzes the phosphorylation of glycerol to yield sn-glycerol 3-phosphate. This is Glycerol kinase from Xylella fastidiosa (strain M23).